Here is a 415-residue protein sequence, read N- to C-terminus: Small ribosomal subunit protein uS5m (415 aa).

Positions Met1–Val31 are disordered. The 67-residue stretch at Phe131–Val197 folds into the S5 DRBM domain. The tract at residues Gly396–Asp415 is disordered.

The protein belongs to the universal ribosomal protein uS5 family. In terms of assembly, component of the mitochondrial ribosome small subunit (28S) which comprises a 12S rRNA and about 30 distinct proteins.

Its subcellular location is the mitochondrion. This Caenorhabditis briggsae protein is Small ribosomal subunit protein uS5m (mrps-5).